The sequence spans 491 residues: UDP-N-acetylmuramate--L-alanine ligase (491 aa).

126-132 (GTHGKTT) serves as a coordination point for ATP.

Belongs to the MurCDEF family.

The protein localises to the cytoplasm. The enzyme catalyses UDP-N-acetyl-alpha-D-muramate + L-alanine + ATP = UDP-N-acetyl-alpha-D-muramoyl-L-alanine + ADP + phosphate + H(+). Its pathway is cell wall biogenesis; peptidoglycan biosynthesis. In terms of biological role, cell wall formation. The polypeptide is UDP-N-acetylmuramate--L-alanine ligase (Escherichia coli O7:K1 (strain IAI39 / ExPEC)).